Consider the following 325-residue polypeptide: Holliday junction branch migration complex subunit RuvB (325 aa).

The segment at 1 to 172 (MENNELLDIT…FGVVFRLEFY (172 aa)) is large ATPase domain (RuvB-L). Residues leucine 11, arginine 12, glycine 53, lysine 56, threonine 57, threonine 58, 119–121 (EDF), arginine 162, tyrosine 172, and arginine 209 each bind ATP. Mg(2+) is bound at residue threonine 57. Positions 173–243 (NSEELKEIVK…IAQEALIAMD (71 aa)) are small ATPAse domain (RuvB-S). Residues 246 to 325 (DYGLDDMDRK…LKRKIPERLF (80 aa)) form a head domain (RuvB-H) region. Positions 301 and 306 each coordinate DNA.

The protein belongs to the RuvB family. As to quaternary structure, homohexamer. Forms an RuvA(8)-RuvB(12)-Holliday junction (HJ) complex. HJ DNA is sandwiched between 2 RuvA tetramers; dsDNA enters through RuvA and exits via RuvB. An RuvB hexamer assembles on each DNA strand where it exits the tetramer. Each RuvB hexamer is contacted by two RuvA subunits (via domain III) on 2 adjacent RuvB subunits; this complex drives branch migration. In the full resolvosome a probable DNA-RuvA(4)-RuvB(12)-RuvC(2) complex forms which resolves the HJ.

It localises to the cytoplasm. It carries out the reaction ATP + H2O = ADP + phosphate + H(+). The RuvA-RuvB-RuvC complex processes Holliday junction (HJ) DNA during genetic recombination and DNA repair, while the RuvA-RuvB complex plays an important role in the rescue of blocked DNA replication forks via replication fork reversal (RFR). RuvA specifically binds to HJ cruciform DNA, conferring on it an open structure. The RuvB hexamer acts as an ATP-dependent pump, pulling dsDNA into and through the RuvAB complex. RuvB forms 2 homohexamers on either side of HJ DNA bound by 1 or 2 RuvA tetramers; 4 subunits per hexamer contact DNA at a time. Coordinated motions by a converter formed by DNA-disengaged RuvB subunits stimulates ATP hydrolysis and nucleotide exchange. Immobilization of the converter enables RuvB to convert the ATP-contained energy into a lever motion, pulling 2 nucleotides of DNA out of the RuvA tetramer per ATP hydrolyzed, thus driving DNA branch migration. The RuvB motors rotate together with the DNA substrate, which together with the progressing nucleotide cycle form the mechanistic basis for DNA recombination by continuous HJ branch migration. Branch migration allows RuvC to scan DNA until it finds its consensus sequence, where it cleaves and resolves cruciform DNA. The polypeptide is Holliday junction branch migration complex subunit RuvB (Thermodesulfovibrio yellowstonii (strain ATCC 51303 / DSM 11347 / YP87)).